The chain runs to 367 residues: Transcription factor aptf-2 (367 aa).

Residues 29-49 form a disordered region; sequence VPATKETGPSSSAECSTQPAV. The segment covering 36–47 has biased composition (polar residues); that stretch reads GPSSSAECSTQP. Positions 220–354 are H-S-H (helix-span-helix), dimerization; sequence AKQKAFPNKV…GVASELRRLT (135 aa).

Belongs to the AP-2 family. Binds DNA as a dimer.

Its subcellular location is the nucleus. The protein localises to the cytoplasm. Sequence-specific DNA-binding protein that interacts with enhancer elements to regulate transcription of selected genes. Required for neuroblast and epidermal morphogenesis, perhaps acting in cooperation with transcription factor aptf-4. The chain is Transcription factor aptf-2 from Caenorhabditis elegans.